Consider the following 112-residue polypeptide: Small ribosomal subunit protein bS6 (112 aa).

It belongs to the bacterial ribosomal protein bS6 family.

Its function is as follows. Binds together with bS18 to 16S ribosomal RNA. The protein is Small ribosomal subunit protein bS6 of Legionella pneumophila (strain Paris).